Consider the following 546-residue polypeptide: Tegument protein UL21 homolog (546 aa).

It belongs to the alphaherpesvirinae HHV-1 UL21 protein family.

The protein localises to the virion tegument. Its subcellular location is the host cytoplasm. It localises to the host nucleus. In terms of biological role, may facilitate the viral transport through neural circuits. The sequence is that of Tegument protein UL21 homolog (MDV033) from Gallus gallus (Chicken).